Reading from the N-terminus, the 134-residue chain is U35-theraphotoxin-Cg1a (134 aa).

The first 18 residues, 1-18, serve as a signal peptide directing secretion; sequence MLVTLLETFSVVFQVANG. Residues 19-56 constitute a propeptide that is removed on maturation; sequence DGNCVPRFQDDVEFCDNYILEAVTEASKMIAPRAREQK.

As to expression, expressed by the venom gland.

The protein resides in the secreted. Its function is as follows. Probable secreted venom toxin. This chain is U35-theraphotoxin-Cg1a, found in Chilobrachys guangxiensis (Chinese earth tiger tarantula).